The following is a 492-amino-acid chain: N-succinylglutamate 5-semialdehyde dehydrogenase (492 aa).

NAD(+) is bound at residue 220 to 225 (GSANTG). Active-site residues include Glu243 and Cys277.

This sequence belongs to the aldehyde dehydrogenase family. AstD subfamily.

It carries out the reaction N-succinyl-L-glutamate 5-semialdehyde + NAD(+) + H2O = N-succinyl-L-glutamate + NADH + 2 H(+). The protein operates within amino-acid degradation; L-arginine degradation via AST pathway; L-glutamate and succinate from L-arginine: step 4/5. Catalyzes the NAD-dependent reduction of succinylglutamate semialdehyde into succinylglutamate. In Escherichia coli O7:K1 (strain IAI39 / ExPEC), this protein is N-succinylglutamate 5-semialdehyde dehydrogenase.